A 348-amino-acid polypeptide reads, in one-letter code: Ferredoxin--NADP reductase 1 (348 aa).

7 residues coordinate FAD: Glu36, Lys44, Tyr48, Ile88, Pro123, Asp285, and Ser326. Positions 329 to 348 are disordered; it reads EKFKKKNEQLKQEKQAQLMN.

It belongs to the ferredoxin--NADP reductase type 2 family. Homodimer. The cofactor is FAD.

The catalysed reaction is 2 reduced [2Fe-2S]-[ferredoxin] + NADP(+) + H(+) = 2 oxidized [2Fe-2S]-[ferredoxin] + NADPH. The chain is Ferredoxin--NADP reductase 1 from Shouchella clausii (strain KSM-K16) (Alkalihalobacillus clausii).